The sequence spans 75 residues: uncharacterized protein (75 aa).

This is an uncharacterized protein from Escherichia coli O6:H1 (strain CFT073 / ATCC 700928 / UPEC).